Here is a 373-residue protein sequence, read N- to C-terminus: tRNA-specific 2-thiouridylase MnmA (373 aa).

ATP-binding positions include 12–19 and Met-38; that span reads GMSGGVDS. The interaction with target base in tRNA stretch occupies residues 98–100; it reads NPD. Cys-103 acts as the Nucleophile in catalysis. Cys-103 and Cys-200 are joined by a disulfide. Position 127 (Gly-127) interacts with ATP. An interaction with tRNA region spans residues 150–152; it reads KDQ. Cys-200 serves as the catalytic Cysteine persulfide intermediate. The segment at 312 to 313 is interaction with tRNA; it reads RY.

The protein belongs to the MnmA/TRMU family.

It is found in the cytoplasm. The enzyme catalyses S-sulfanyl-L-cysteinyl-[protein] + uridine(34) in tRNA + AH2 + ATP = 2-thiouridine(34) in tRNA + L-cysteinyl-[protein] + A + AMP + diphosphate + H(+). Functionally, catalyzes the 2-thiolation of uridine at the wobble position (U34) of tRNA, leading to the formation of s(2)U34. This chain is tRNA-specific 2-thiouridylase MnmA, found in Streptococcus pyogenes serotype M3 (strain SSI-1).